The sequence spans 398 residues: Elongation factor Tu (398 aa).

Residues 10–207 enclose the tr-type G domain; it reads KPHVNIGTIG…TVDEYIPEPE (198 aa). Residues 19–26 form a G1 region; the sequence is GHVDHGKT. Residue 19 to 26 participates in GTP binding; that stretch reads GHVDHGKT. Mg(2+) is bound at residue threonine 26. Residues 63–67 are G2; that stretch reads GITIN. The interval 84 to 87 is G3; it reads DAPG. GTP-binding positions include 84–88 and 139–142; these read DAPGH and NKVD. A G4 region spans residues 139 to 142; the sequence is NKVD. The interval 177–179 is G5; sequence SAL.

Belongs to the TRAFAC class translation factor GTPase superfamily. Classic translation factor GTPase family. EF-Tu/EF-1A subfamily. In terms of assembly, monomer.

It is found in the cytoplasm. It catalyses the reaction GTP + H2O = GDP + phosphate + H(+). Its function is as follows. GTP hydrolase that promotes the GTP-dependent binding of aminoacyl-tRNA to the A-site of ribosomes during protein biosynthesis. The chain is Elongation factor Tu from Streptococcus thermophilus (strain CNRZ 1066).